A 112-amino-acid chain; its full sequence is Protein preY, mitochondrial (112 aa).

Residues 1 to 34 (MLSATCRRLAPALRRLRALSAVAGRFLQVPGARL) constitute a mitochondrion transit peptide. One can recognise a TRM112 domain in the interval 49–95 (HPALLQFLVCPLSKKPLRYEASTNELVNEELGIAYPIIDGIPNMIPQ).

The protein belongs to the PREY family. In terms of assembly, interacts (via TRM112 domain) with NDUFAF5; the interaction is direct and stabilizes NDUFAF5 protein. Interacts with COQ5; the interaction is direct, stabilizes COQ5 protein and associates PYURF with COQ enzyme complex.

Its subcellular location is the mitochondrion. Functionally, in mitochondria, S-adenosylmethionine-dependent methyltransferase chaperone that supports both coenzyme Q biosynthesis, by stabilizing its components, such as COQ5, and NADH:ubiquinone oxidoreductase complex (complex I, MT-ND1) assembly, by stabilizing complex I assembly factors, such as NDUFAF5. The chain is Protein preY, mitochondrial (Pyurf) from Mus musculus (Mouse).